A 213-amino-acid chain; its full sequence is Octanoyltransferase (213 aa).

One can recognise a BPL/LPL catalytic domain in the interval 35 to 213; that stretch reads DERGDAVLLL…ERHLPTLIEP (179 aa). Substrate-binding positions include 73 to 80, 145 to 147, and 158 to 160; these read RGGKITWH, AIG, and GFS. Catalysis depends on Cys-176, which acts as the Acyl-thioester intermediate.

This sequence belongs to the LipB family.

It localises to the cytoplasm. The enzyme catalyses octanoyl-[ACP] + L-lysyl-[protein] = N(6)-octanoyl-L-lysyl-[protein] + holo-[ACP] + H(+). It participates in protein modification; protein lipoylation via endogenous pathway; protein N(6)-(lipoyl)lysine from octanoyl-[acyl-carrier-protein]: step 1/2. In terms of biological role, catalyzes the transfer of endogenously produced octanoic acid from octanoyl-acyl-carrier-protein onto the lipoyl domains of lipoate-dependent enzymes. Lipoyl-ACP can also act as a substrate although octanoyl-ACP is likely to be the physiological substrate. The chain is Octanoyltransferase from Salinispora tropica (strain ATCC BAA-916 / DSM 44818 / JCM 13857 / NBRC 105044 / CNB-440).